We begin with the raw amino-acid sequence, 629 residues long: tRNA uridine 5-carboxymethylaminomethyl modification enzyme MnmG (629 aa).

Residue 13–18 coordinates FAD; it reads GGGHAG. NAD(+) is bound at residue 273-287; it reads GPRYCPSIEDKIHRF.

It belongs to the MnmG family. As to quaternary structure, homodimer. Heterotetramer of two MnmE and two MnmG subunits. Requires FAD as cofactor.

Its subcellular location is the cytoplasm. Functionally, NAD-binding protein involved in the addition of a carboxymethylaminomethyl (cmnm) group at the wobble position (U34) of certain tRNAs, forming tRNA-cmnm(5)s(2)U34. The sequence is that of tRNA uridine 5-carboxymethylaminomethyl modification enzyme MnmG from Shewanella amazonensis (strain ATCC BAA-1098 / SB2B).